Reading from the N-terminus, the 172-residue chain is MVKYSRDPSNPTKSAKACGKDLRVHFKNTRETAFALRRMPLGKAKRYLEDVLAHKQAIPFRRYCRGVGRTAQVKNRQPNGQGRWPAKSAQFVLDLLKNAESNAEVKGLDVDNLYISHIQVNQAQKQRRRTYRAHGRINPYMSNPCHIELILSEKEEPVKKEADNVVAPRKAI.

Belongs to the universal ribosomal protein uL22 family.

This is Large ribosomal subunit protein uL22y from Hordeum vulgare (Barley).